Consider the following 382-residue polypeptide: Protein phosphatase 1A (382 aa).

A lipid anchor (N-myristoyl glycine) is attached at glycine 2. The PPM-type phosphatase domain maps to arginine 23–phenylalanine 291. Mn(2+)-binding residues include aspartate 60, glycine 61, aspartate 239, and aspartate 282. Residues serine 375 and serine 377 each carry the phosphoserine modification.

It belongs to the PP2C family. Monomer. Interacts with SMAD2; the interaction dephosphorylates SMAD2 in its C-terminal SXS motif resulting in disruption of the SMAD2/SMAD4 complex, SMAD2 nuclear export and termination of the TGF-beta-mediated signaling. Interacts with SMAD2; the interaction dephosphorylates SMAD2 in its C-terminal SXS motif resulting in disruption of the SMAD2/SMAD4 complex, SMAD2 nuclear export and termination of the TGF-beta-mediated signaling. Interacts with the phosphorylated form of IKBKB/IKKB. Requires Mg(2+) as cofactor. The cofactor is Mn(2+). Post-translationally, N-myristoylation is essential for the recognition of its substrates for dephosphorylation.

Its subcellular location is the nucleus. It localises to the cytoplasm. It is found in the cytosol. The protein localises to the membrane. It carries out the reaction O-phospho-L-seryl-[protein] + H2O = L-seryl-[protein] + phosphate. It catalyses the reaction O-phospho-L-threonyl-[protein] + H2O = L-threonyl-[protein] + phosphate. In terms of biological role, enzyme with a broad specificity. Negatively regulates TGF-beta signaling through dephosphorylating SMAD2 and SMAD3, resulting in their dissociation from SMAD4, nuclear export of the SMADs and termination of the TGF-beta-mediated signaling. Dephosphorylates PRKAA1 and PRKAA2. Plays an important role in the termination of TNF-alpha-mediated NF-kappa-B activation through dephosphorylating and inactivating IKBKB/IKKB. The sequence is that of Protein phosphatase 1A (PPM1A) from Bos taurus (Bovine).